A 358-amino-acid chain; its full sequence is DNA replication and repair protein RecF (358 aa).

Position 30–37 (30–37 (GANGSGKT)) interacts with ATP.

This sequence belongs to the RecF family.

It localises to the cytoplasm. The RecF protein is involved in DNA metabolism; it is required for DNA replication and normal SOS inducibility. RecF binds preferentially to single-stranded, linear DNA. It also seems to bind ATP. This is DNA replication and repair protein RecF from Acinetobacter baylyi (strain ATCC 33305 / BD413 / ADP1).